A 347-amino-acid polypeptide reads, in one-letter code: Phosphoribosylformylglycinamidine cyclo-ligase (347 aa).

This sequence belongs to the AIR synthase family.

It localises to the cytoplasm. The catalysed reaction is 2-formamido-N(1)-(5-O-phospho-beta-D-ribosyl)acetamidine + ATP = 5-amino-1-(5-phospho-beta-D-ribosyl)imidazole + ADP + phosphate + H(+). The protein operates within purine metabolism; IMP biosynthesis via de novo pathway; 5-amino-1-(5-phospho-D-ribosyl)imidazole from N(2)-formyl-N(1)-(5-phospho-D-ribosyl)glycinamide: step 2/2. The protein is Phosphoribosylformylglycinamidine cyclo-ligase of Yersinia pestis.